A 488-amino-acid polypeptide reads, in one-letter code: Glutamyl-tRNA(Gln) amidotransferase subunit A (488 aa).

Active-site charge relay system residues include Lys77 and Ser152. Ser176 functions as the Acyl-ester intermediate in the catalytic mechanism.

Belongs to the amidase family. GatA subfamily. Heterotrimer of A, B and C subunits.

It carries out the reaction L-glutamyl-tRNA(Gln) + L-glutamine + ATP + H2O = L-glutaminyl-tRNA(Gln) + L-glutamate + ADP + phosphate + H(+). In terms of biological role, allows the formation of correctly charged Gln-tRNA(Gln) through the transamidation of misacylated Glu-tRNA(Gln) in organisms which lack glutaminyl-tRNA synthetase. The reaction takes place in the presence of glutamine and ATP through an activated gamma-phospho-Glu-tRNA(Gln). This is Glutamyl-tRNA(Gln) amidotransferase subunit A from Streptococcus pneumoniae (strain JJA).